Reading from the N-terminus, the 73-residue chain is Putative antitoxin VapB21 (73 aa).

The protein belongs to the UPF0330 family.

Possibly the antitoxin component of a type II toxin-antitoxin (TA) system. Its cognate toxin is VapC21 (Potential). This chain is Putative antitoxin VapB21 (vapB21), found in Sulfurisphaera tokodaii (strain DSM 16993 / JCM 10545 / NBRC 100140 / 7) (Sulfolobus tokodaii).